The following is an 864-amino-acid chain: Leucine--tRNA ligase (864 aa).

Positions 42–52 (PYPSGKLHMGH) match the 'HIGH' region motif. A 'KMSKS' region motif is present at residues 624 to 628 (KMSKS). K627 lines the ATP pocket.

The protein belongs to the class-I aminoacyl-tRNA synthetase family.

The protein localises to the cytoplasm. The catalysed reaction is tRNA(Leu) + L-leucine + ATP = L-leucyl-tRNA(Leu) + AMP + diphosphate. This chain is Leucine--tRNA ligase, found in Burkholderia lata (strain ATCC 17760 / DSM 23089 / LMG 22485 / NCIMB 9086 / R18194 / 383).